The primary structure comprises 335 residues: MKMEESAAHFFEGTEKLLELWFSQQDASKGSGDLRDIPRFEWDKLLENVHCLIISVTKTDKQEAYVLSESSMFVSKRRFILKTCGTTLLLQALVPLLELAREYCGFDGIQNFFYSRKNFMKPNHQEYPHRNFHEEVEFLNQIFPNGAAYCMGRINSDCWYLYTLDIPDEYVISQPDQTLEILMSELDPEVMDQFYMKEGVTANDVTRVSGIRDLITGSVIDATMFSPCGYSMNGMKSDGTYWTIHITPEPDFSYVSFETNVSLTTYDDLISKVVDVFKPRKFVTTLFVNQSSKCRTTFSCAQKIEGFRRVDRQFAQFNDYNFVFTSFAKIQPQQS.

Active-site residues include E12 and E15. The active-site Schiff-base intermediate with substrate; via pyruvic acid is the S70. S70 carries the pyruvic acid (Ser); by autocatalysis modification. Catalysis depends on C84, which acts as the Proton donor; for catalytic activity. Residues S231 and H245 each act as proton acceptor; for processing activity in the active site.

This sequence belongs to the eukaryotic AdoMetDC family. Pyruvate is required as a cofactor. Post-translationally, is synthesized initially as an inactive proenzyme. Formation of the active enzyme involves a self-maturation process in which the active site pyruvoyl group is generated from an internal serine residue via an autocatalytic post-translational modification. Two non-identical subunits are generated from the proenzyme in this reaction, and the pyruvate is formed at the N-terminus of the alpha chain, which is derived from the carboxyl end of the proenzyme. The post-translation cleavage follows an unusual pathway, termed non-hydrolytic serinolysis, in which the side chain hydroxyl group of the serine supplies its oxygen atom to form the C-terminus of the beta chain, while the remainder of the serine residue undergoes an oxidative deamination to produce ammonia and the pyruvoyl group blocking the N-terminus of the alpha chain.

The enzyme catalyses S-adenosyl-L-methionine + H(+) = S-adenosyl 3-(methylsulfanyl)propylamine + CO2. It functions in the pathway amine and polyamine biosynthesis; S-adenosylmethioninamine biosynthesis; S-adenosylmethioninamine from S-adenosyl-L-methionine: step 1/1. Essential for biosynthesis of the polyamines spermidine and spermine. Promotes maintenance and self-renewal of embryonic stem cells, by maintaining spermine levels. This chain is S-adenosylmethionine decarboxylase proenzyme (amd1), found in Xenopus laevis (African clawed frog).